A 713-amino-acid polypeptide reads, in one-letter code: Fibroblast growth factor receptor 4 (713 aa).

An N-terminal signal peptide occupies residues 1–20 (MLPLWLVLAGLLLAVGPAAS). The disordered stretch occupies residues 21–54 (HRGEMEPDSLASGDDDEDSDGDGPHGDRSEEPVY). The Extracellular segment spans residues 21–281 (HRGEMEPDSL…AETSEAKYTD (261 aa)). The span at 42 to 54 (DGPHGDRSEEPVY) shows a compositional bias: basic and acidic residues. 2 Ig-like C2-type domains span residues 59 to 152 (PYWT…YLLD) and 161 to 261 (PILQ…AWLT). Residues C84 and C136 are joined by a disulfide bond. N133, N170, N202, N223, and N234 each carry an N-linked (GlcNAc...) asparagine glycan. C183 and C245 are oxidised to a cystine. Residues 282–302 (IIIYTSGSLAVAMALIIVVLC) traverse the membrane as a helical segment. Residues 303-713 (RMQTQSSKQP…CLFSCPSGRT (411 aa)) lie on the Cytoplasmic side of the membrane. The Protein kinase domain maps to 379–667 (LVLGKPLGEG…ILAAISEEYL (289 aa)). ATP-binding positions include 385–393 (LGEGCFGQV) and K415. D524 acts as the Proton acceptor in catalysis. Residues Y554, Y555, and Y666 each carry the phosphotyrosine; by autocatalysis modification.

This sequence belongs to the protein kinase superfamily. Tyr protein kinase family. Fibroblast growth factor receptor subfamily. As to quaternary structure, monomer. Homodimer after ligand binding. Interacts with FGF1, FGF2, FGF4, FGF6, FGF8, FGF9, FGF16, FGF17, FGF18, FGF19, FGF21 and FGF23 (in vitro). Binding affinity for FGF family members is enhanced by interactions between FGFs and heparan sulfate proteoglycans. Interacts with KLB; this strongly increases the affinity for FGF19 and FGF23. Affinity for FGF19 is strongly increased by KLB and sulfated glycosaminoglycans. KLB and KL both interact with the core-glycosylated FGFR4 in the endoplasmic reticulum and promote its degradation, so that only FGFR4 with fully mature N-glycans is expressed at the cell surface. Identified in a complex with NCAM1, CDH2, PLCG1, FRS2, SRC, SHC1, GAP43 and CTTN. Interacts with MMP14 and HIP1. Interacts with STAT3. In terms of processing, N-glycosylated. Full maturation of the glycan chains in the Golgi is essential for high affinity interaction with FGF19. Post-translationally, ubiquitinated. Subject to proteasomal degradation when not fully glycosylated. Autophosphorylated. Binding of FGF family members together with heparan sulfate proteoglycan or heparin promotes receptor dimerization and autophosphorylation on tyrosine residues. Autophosphorylation occurs in trans between the two FGFR molecules present in the dimer.

Its subcellular location is the cell membrane. It localises to the endosome. The protein localises to the endoplasmic reticulum. The enzyme catalyses L-tyrosyl-[protein] + ATP = O-phospho-L-tyrosyl-[protein] + ADP + H(+). Present in an inactive conformation in the absence of bound ligand. Ligand binding leads to dimerization and activation by autophosphorylation on tyrosine residues. Its function is as follows. Tyrosine-protein kinase that acts as a cell-surface receptor for fibroblast growth factors and plays a role in the regulation of cell proliferation, differentiation and migration, and in regulation of lipid metabolism, bile acid biosynthesis, glucose uptake, vitamin D metabolism and phosphate homeostasis. Required for normal down-regulation of the expression of CYP7A1, the rate-limiting enzyme in bile acid synthesis, in response to FGF19. Phosphorylates PLCG1 and FRS2. Ligand binding leads to the activation of several signaling cascades. Activation of PLCG1 leads to the production of the cellular signaling molecules diacylglycerol and inositol 1,4,5-trisphosphate. Phosphorylation of FRS2 triggers recruitment of GRB2, GAB1, PIK3R1 and SOS1, and mediates activation of RAS, MAPK1/ERK2, MAPK3/ERK1 and the MAP kinase signaling pathway, as well as of the AKT1 signaling pathway. Promotes SRC-dependent phosphorylation of the matrix protease MMP14 and its lysosomal degradation. FGFR4 signaling is down-regulated by receptor internalization and degradation; MMP14 promotes internalization and degradation of FGFR4. This Coturnix coturnix (Common quail) protein is Fibroblast growth factor receptor 4 (FGFR4).